Reading from the N-terminus, the 436-residue chain is 3-ketoacyl-CoA thiolase (436 aa).

Cys-99 acts as the Acyl-thioester intermediate in catalysis. Residues His-392 and Cys-422 each act as proton acceptor in the active site.

The protein belongs to the thiolase-like superfamily. Thiolase family. In terms of assembly, heterotetramer of two alpha chains (FadJ) and two beta chains (FadI).

It localises to the cytoplasm. The catalysed reaction is an acyl-CoA + acetyl-CoA = a 3-oxoacyl-CoA + CoA. Its pathway is lipid metabolism; fatty acid beta-oxidation. Its function is as follows. Catalyzes the final step of fatty acid oxidation in which acetyl-CoA is released and the CoA ester of a fatty acid two carbons shorter is formed. The sequence is that of 3-ketoacyl-CoA thiolase from Shewanella sp. (strain W3-18-1).